The following is an 85-amino-acid chain: Small ribosomal subunit protein uS12m (85 aa).

Belongs to the universal ribosomal protein uS12 family.

It localises to the mitochondrion matrix. The protein localises to the kinetoplast. Functionally, protein S12 is involved in the translation initiation step. The protein is Small ribosomal subunit protein uS12m (RPS12) of Leishmania tarentolae (Sauroleishmania tarentolae).